A 413-amino-acid polypeptide reads, in one-letter code: UPF0754 membrane protein PCC7424_0748 (413 aa).

2 helical membrane passes run 3–23 (IALELSTIWTIALPPITGAII) and 391–411 (IVNLGGILGFFVGTIQTVILL).

The protein belongs to the UPF0754 family.

The protein localises to the cell inner membrane. This is UPF0754 membrane protein PCC7424_0748 from Gloeothece citriformis (strain PCC 7424) (Cyanothece sp. (strain PCC 7424)).